Consider the following 208-residue polypeptide: Uracil phosphoribosyltransferase (208 aa).

5-phospho-alpha-D-ribose 1-diphosphate is bound by residues Arg-78, Arg-103, and 130 to 138; that span reads DPMLATGGS. Residues Ile-193 and 198-200 each bind uracil; that span reads GDA. 5-phospho-alpha-D-ribose 1-diphosphate is bound at residue Asp-199.

This sequence belongs to the UPRTase family. Mg(2+) serves as cofactor.

It catalyses the reaction UMP + diphosphate = 5-phospho-alpha-D-ribose 1-diphosphate + uracil. The protein operates within pyrimidine metabolism; UMP biosynthesis via salvage pathway; UMP from uracil: step 1/1. Its activity is regulated as follows. Allosterically activated by GTP. Catalyzes the conversion of uracil and 5-phospho-alpha-D-ribose 1-diphosphate (PRPP) to UMP and diphosphate. In Thermus thermophilus (strain ATCC 27634 / DSM 579 / HB8), this protein is Uracil phosphoribosyltransferase.